A 394-amino-acid polypeptide reads, in one-letter code: Ketoisovalerate oxidoreductase subunit VorA (394 aa).

As to quaternary structure, heterotetramer of one alpha, one beta, one delta and one gamma chain.

It catalyses the reaction 3-methyl-2-oxobutanoate + 2 oxidized [2Fe-2S]-[ferredoxin] + CoA = 2-methylpropanoyl-CoA + 2 reduced [2Fe-2S]-[ferredoxin] + CO2 + H(+). This chain is Ketoisovalerate oxidoreductase subunit VorA (vorA), found in Pyrococcus horikoshii (strain ATCC 700860 / DSM 12428 / JCM 9974 / NBRC 100139 / OT-3).